We begin with the raw amino-acid sequence, 276 residues long: Tryptophan synthase alpha chain (276 aa).

Catalysis depends on proton acceptor residues glutamate 49 and aspartate 60.

It belongs to the TrpA family. As to quaternary structure, tetramer of two alpha and two beta chains.

The catalysed reaction is (1S,2R)-1-C-(indol-3-yl)glycerol 3-phosphate + L-serine = D-glyceraldehyde 3-phosphate + L-tryptophan + H2O. It participates in amino-acid biosynthesis; L-tryptophan biosynthesis; L-tryptophan from chorismate: step 5/5. The alpha subunit is responsible for the aldol cleavage of indoleglycerol phosphate to indole and glyceraldehyde 3-phosphate. This is Tryptophan synthase alpha chain from Acidiphilium cryptum (strain JF-5).